The primary structure comprises 143 residues: Large-conductance mechanosensitive channel (143 aa).

2 helical membrane-spanning segments follow: residues 19–39 (VGVI…GDLI) and 81–101 (GSFL…FGVI).

This sequence belongs to the MscL family. In terms of assembly, homopentamer.

Its subcellular location is the cell inner membrane. Functionally, channel that opens in response to stretch forces in the membrane lipid bilayer. May participate in the regulation of osmotic pressure changes within the cell. The protein is Large-conductance mechanosensitive channel of Rhodopseudomonas palustris (strain BisB5).